Here is an 870-residue protein sequence, read N- to C-terminus: Valine--tRNA ligase (870 aa).

The 'HIGH' region motif lies at 42–52; it reads PNVTGVLHIGH. A 'KMSKS' region motif is present at residues 527-531; that stretch reads KMSKS. Residue K530 coordinates ATP. The stretch at 800–870 forms a coiled coil; it reads LENVDLSGIL…ISVELQNLRG (71 aa).

It belongs to the class-I aminoacyl-tRNA synthetase family. ValS type 1 subfamily. Monomer.

Its subcellular location is the cytoplasm. The catalysed reaction is tRNA(Val) + L-valine + ATP = L-valyl-tRNA(Val) + AMP + diphosphate. Functionally, catalyzes the attachment of valine to tRNA(Val). As ValRS can inadvertently accommodate and process structurally similar amino acids such as threonine, to avoid such errors, it has a 'posttransfer' editing activity that hydrolyzes mischarged Thr-tRNA(Val) in a tRNA-dependent manner. The sequence is that of Valine--tRNA ligase from Campylobacter jejuni (strain RM1221).